The sequence spans 427 residues: UDP-N-acetylglucosamine 1-carboxyvinyltransferase (427 aa).

Position 22–23 (22–23) interacts with phosphoenolpyruvate; that stretch reads KN. Arginine 99 serves as a coordination point for UDP-N-acetyl-alpha-D-glucosamine. Cysteine 123 (proton donor) is an active-site residue. Residue cysteine 123 is modified to 2-(S-cysteinyl)pyruvic acid O-phosphothioketal. UDP-N-acetyl-alpha-D-glucosamine contacts are provided by residues 128–132, aspartate 313, and isoleucine 335; that span reads RPIDL.

This sequence belongs to the EPSP synthase family. MurA subfamily.

It localises to the cytoplasm. The catalysed reaction is phosphoenolpyruvate + UDP-N-acetyl-alpha-D-glucosamine = UDP-N-acetyl-3-O-(1-carboxyvinyl)-alpha-D-glucosamine + phosphate. Its pathway is cell wall biogenesis; peptidoglycan biosynthesis. Functionally, cell wall formation. Adds enolpyruvyl to UDP-N-acetylglucosamine. The protein is UDP-N-acetylglucosamine 1-carboxyvinyltransferase of Novosphingobium aromaticivorans (strain ATCC 700278 / DSM 12444 / CCUG 56034 / CIP 105152 / NBRC 16084 / F199).